Consider the following 396-residue polypeptide: MGKEKLILAYSGGLDTSVAIAWLKKDYDVIAVCMDVGEGKDLDFIHDKALTIGAIESYILDVKDEFAEHFVLPALQAHAMYEQKYPLVSALSRPIIAQKLVEMAHQTGATTIAHGCTGKGNDQVRFEVAIAALDPELKVIAPVREWKWHREEEITFAKANGVPIPADLDNPYSIDQNLWGRANECGVLENPWNQAPEEAFGITKSPEEAPDCAEYIDITFQNGKPIAINNQEMTLSDLILSLNEIAGKHGIGRIDHVENRLVGIKSREIYECPAAMVLLAAHKEIEDLTLVREVSHFKPILENELSNLIYNALWFSPATKAIIAYVKETQKVVNGTTKVKLYKGSAQVVARHSSNSLYDENLATYTAADSFDQDAAVGFIKLWGLPTQVNAQVNKG.

9–17 (AYSGGLDTS) is an ATP binding site. Y85 provides a ligand contact to L-citrulline. G115 serves as a coordination point for ATP. T117, N121, and D122 together coordinate L-aspartate. Residue N121 participates in L-citrulline binding. 4 residues coordinate L-citrulline: R125, S173, E258, and Y270.

It belongs to the argininosuccinate synthase family. Type 1 subfamily. As to quaternary structure, homotetramer.

The protein localises to the cytoplasm. It catalyses the reaction L-citrulline + L-aspartate + ATP = 2-(N(omega)-L-arginino)succinate + AMP + diphosphate + H(+). Its pathway is amino-acid biosynthesis; L-arginine biosynthesis; L-arginine from L-ornithine and carbamoyl phosphate: step 2/3. The sequence is that of Argininosuccinate synthase from Streptococcus agalactiae serotype Ia (strain ATCC 27591 / A909 / CDC SS700).